A 437-amino-acid chain; its full sequence is Elongation factor Tu, mitochondrial (437 aa).

The N-terminal 38 residues, 1–38, are a transit peptide targeting the mitochondrion; it reads MSALLPRLLTRTAFKASGKLLRLSSVISRTFSQTTTSY. Residues 46–242 form the tr-type G domain; it reads KPHVNIGTIG…AVDEYIPTPE (197 aa). The tract at residues 55–62 is G1; it reads GHVDHGKT. GTP is bound at residue 55–62; it reads GHVDHGKT. A G2 region spans residues 96 to 100; that stretch reads GITIS. Residues 117–120 are G3; the sequence is DCPG. Residues 117-121 and 172-175 contribute to the GTP site; these read DCPGH and NKVD. Residues 172–175 are G4; that stretch reads NKVD. The tract at residues 210 to 212 is G5; the sequence is SAL.

It belongs to the TRAFAC class translation factor GTPase superfamily. Classic translation factor GTPase family. EF-Tu/EF-1A subfamily. The precursor is processed in two steps involving mitochondrial intermediate peptidase (MIP) and mitochondrial processing peptidase (MPP).

It localises to the mitochondrion. The protein operates within protein biosynthesis; polypeptide chain elongation. In terms of biological role, G-protein that, in its active GTP-bound form, binds to and delivers aminoacyl-tRNA to the A-site of ribosomes during protein biosynthesis. In the presence of a correct codon-anticodon match between the aminoacyl-tRNA and the A-site codon of the ribosome-bound mRNA, the ribosome acts as a GTPase activator and the GTP is hydrolyzed. The inactive GDP-bound form leaves the ribosome and must be recycled before binding another molecule of aminoacyl-tRNA. Required for mitochondrial protein biosynthesis and maintenance of mitochondrial DNA. The polypeptide is Elongation factor Tu, mitochondrial (TUF1) (Saccharomyces cerevisiae (strain ATCC 204508 / S288c) (Baker's yeast)).